A 310-amino-acid chain; its full sequence is D-alanine--D-alanine ligase (310 aa).

In terms of domain architecture, ATP-grasp spans 105–301; the sequence is KQAFVSAGIL…FEELVERIIL (197 aa). 133–186 contributes to the ATP binding site; sequence SFGLPLVVKPVQEGSSVGISIVKEESQLAAAVKLAFRHDDEILVEQFIKGQEVQ. Mg(2+) contacts are provided by D254, E267, and N269.

The protein belongs to the D-alanine--D-alanine ligase family. Mg(2+) serves as cofactor. It depends on Mn(2+) as a cofactor.

It localises to the cytoplasm. The catalysed reaction is 2 D-alanine + ATP = D-alanyl-D-alanine + ADP + phosphate + H(+). It functions in the pathway cell wall biogenesis; peptidoglycan biosynthesis. Cell wall formation. This chain is D-alanine--D-alanine ligase, found in Pelobacter propionicus (strain DSM 2379 / NBRC 103807 / OttBd1).